Here is a 264-residue protein sequence, read N- to C-terminus: Glutamate racemase (264 aa).

Substrate is bound by residues 10-11 (DS) and 42-43 (YG). Cys-73 serves as the catalytic Proton donor/acceptor. 74 to 75 (NT) serves as a coordination point for substrate. Cys-183 functions as the Proton donor/acceptor in the catalytic mechanism. Residue 184 to 185 (TH) participates in substrate binding.

It belongs to the aspartate/glutamate racemases family.

The enzyme catalyses L-glutamate = D-glutamate. It functions in the pathway cell wall biogenesis; peptidoglycan biosynthesis. Its function is as follows. Provides the (R)-glutamate required for cell wall biosynthesis. In Streptococcus gordonii (strain Challis / ATCC 35105 / BCRC 15272 / CH1 / DL1 / V288), this protein is Glutamate racemase.